The following is a 184-amino-acid chain: Ras-related protein Rap-1b (184 aa).

10–17 is a binding site for GTP; it reads GSGGVGKS. The Effector region signature appears at 32 to 40; it reads YDPTIEDSY. GTP is bound by residues 57-61 and 116-119; these read DTAGT and NKCD. Cysteine methyl ester is present on Cys-181. The S-geranylgeranyl cysteine moiety is linked to residue Cys-181. Positions 182–184 are cleaved as a propeptide — removed in mature form; that stretch reads HLL.

The protein belongs to the small GTPase superfamily. Ras family.

The protein localises to the cell membrane. It localises to the cytoplasm. It is found in the cytosol. Its subcellular location is the cell junction. The enzyme catalyses GTP + H2O = GDP + phosphate + H(+). Probable GTP-binding protein that possesses GTPase activity. May play a role in endothelial cell polarity and endothelial barrier function. This Xenopus laevis (African clawed frog) protein is Ras-related protein Rap-1b (rap1b).